The following is a 480-amino-acid chain: Alpha,alpha-trehalose-phosphate synthase [UDP-forming] 2 (480 aa).

Residues Tyr97 and Asp151 each contribute to the D-glucose 6-phosphate site. The UDP site is built by Arg288 and Lys293. UDP-alpha-D-glucose contacts are provided by Arg288 and Lys293. Arg326 provides a ligand contact to D-glucose 6-phosphate. Residue 387–395 (DGMNLVSFE) coordinates UDP-alpha-D-glucose. Position 391–395 (391–395 (LVSFE)) interacts with UDP.

The protein belongs to the glycosyltransferase 20 family.

It catalyses the reaction D-glucose 6-phosphate + UDP-alpha-D-glucose = alpha,alpha-trehalose 6-phosphate + UDP + H(+). It participates in carbohydrate biosynthesis. In terms of biological role, synthase catalytic subunit of the trehalose synthase complex that catalyzes the production of trehalose from glucose-6-phosphate and UDP-alpha-D-glucose in a two step process. The sequence is that of Alpha,alpha-trehalose-phosphate synthase [UDP-forming] 2 from Aspergillus niger.